Reading from the N-terminus, the 473-residue chain is Lactate utilization protein B (473 aa).

2 4Fe-4S ferredoxin-type domains span residues 302-332 (GSEFRQVLQCIRCAACVNVCPVYRHVGGHSY) and 351-380 (YNDYKELPYASSLCGACTEACPVKIPLHDL). Cys-311, Cys-314, Cys-317, Cys-321, Cys-364, Cys-367, and Cys-371 together coordinate [4Fe-4S] cluster.

The protein belongs to the LutB/YkgF family.

Is involved in L-lactate degradation and allows cells to grow with lactate as the sole carbon source. Has probably a role as an electron transporter during oxidation of L-lactate. In Bacillus cereus (strain AH820), this protein is Lactate utilization protein B.